A 338-amino-acid polypeptide reads, in one-letter code: MLVMRPAQAADLPQVQRLAADSPVGVTSLPDDAERLRDKILASEASFAAEVSYNGEESYFFVLEDSASGELVGCSAIVASAGFSEPFYSFRNETFVHASRSLSIHNKIHVLSLCHDLTGNSLLTSFYVQRDLVQSVYAELNSRGRLLFMASHPERFADAVVVEIVGYSDEQGESPFWNAVGRNFFDLNYIEAEKLSGLKSRTFLAELMPHYPIYVPLLPDAAQESMGQVHPRAQITFDILMREGFETDNYIDIFDGGPTLHARTSGIRSIAQSRVVPVKIGEAPKSGRPYLVTNGQLQDFRAVVLDLDWAPGKPVALSVEAAEALGVGEGASVRLVAV.

The protein belongs to the succinylarginine dihydrolase family. Heterotetramer of two alpha and two beta subunits.

The enzyme catalyses succinyl-CoA + L-arginine = N(2)-succinyl-L-arginine + CoA + H(+). The protein operates within amino-acid degradation; L-arginine degradation via AST pathway; L-glutamate and succinate from L-arginine: step 1/5. Catalyzes the transfer of succinyl-CoA to arginine to produce N(2)-succinylarginine. Also acts on L-ornithine. In Pseudomonas aeruginosa (strain ATCC 15692 / DSM 22644 / CIP 104116 / JCM 14847 / LMG 12228 / 1C / PRS 101 / PAO1), this protein is Arginine N-succinyltransferase subunit alpha (astA).